Consider the following 458-residue polypeptide: DNA repair protein RadA (458 aa).

Residues 11–28 (CNDCGAEFSRWQGQCSAC) form a C4-type zinc finger. Residue 100-107 (GHPGAGKS) participates in ATP binding. The RadA KNRFG motif signature appears at 256 to 260 (KNRFG). Positions 355 to 458 (DVFVNVVGGV…TDALAVLDNL (104 aa)) are lon-protease-like.

The protein belongs to the RecA family. RadA subfamily.

DNA-dependent ATPase involved in processing of recombination intermediates, plays a role in repairing DNA breaks. Stimulates the branch migration of RecA-mediated strand transfer reactions, allowing the 3' invading strand to extend heteroduplex DNA faster. Binds ssDNA in the presence of ADP but not other nucleotides, has ATPase activity that is stimulated by ssDNA and various branched DNA structures, but inhibited by SSB. Does not have RecA's homology-searching function. The protein is DNA repair protein RadA of Haemophilus influenzae (strain ATCC 51907 / DSM 11121 / KW20 / Rd).